The chain runs to 112 residues: ATP synthase epsilon chain (112 aa).

This sequence belongs to the ATPase epsilon chain family. As to quaternary structure, F-type ATPases have 2 components, CF(1) - the catalytic core - and CF(0) - the membrane proton channel. CF(1) has five subunits: alpha(3), beta(3), gamma(1), delta(1), epsilon(1). CF(0) has three main subunits: a, b and c.

Its subcellular location is the cell inner membrane. Produces ATP from ADP in the presence of a proton gradient across the membrane. In Rickettsia rickettsii (strain Sheila Smith), this protein is ATP synthase epsilon chain.